A 687-amino-acid chain; its full sequence is Polyphosphate kinase (687 aa).

N45 is a binding site for ATP. Mg(2+) contacts are provided by R375 and R405. H435 (phosphohistidine intermediate) is an active-site residue. ATP contacts are provided by Y472, R568, and H596.

Belongs to the polyphosphate kinase 1 (PPK1) family. The cofactor is Mg(2+). In terms of processing, an intermediate of this reaction is the autophosphorylated ppk in which a phosphate is covalently linked to a histidine residue through a N-P bond.

It carries out the reaction [phosphate](n) + ATP = [phosphate](n+1) + ADP. In terms of biological role, catalyzes the reversible transfer of the terminal phosphate of ATP to form a long-chain polyphosphate (polyP). The protein is Polyphosphate kinase of Burkholderia multivorans (strain ATCC 17616 / 249).